The sequence spans 289 residues: Pantothenate synthetase (289 aa).

ATP is bound at residue Met-33–His-40. His-40 functions as the Proton donor in the catalytic mechanism. Gln-64 contributes to the (R)-pantoate binding site. Gln-64 is a binding site for beta-alanine. Residue Gly-155–Asp-158 coordinates ATP. Gln-161 contributes to the (R)-pantoate binding site. Residues Ala-184 and Leu-192 to Arg-195 contribute to the ATP site.

The protein belongs to the pantothenate synthetase family. As to quaternary structure, homodimer.

The protein resides in the cytoplasm. The catalysed reaction is (R)-pantoate + beta-alanine + ATP = (R)-pantothenate + AMP + diphosphate + H(+). It participates in cofactor biosynthesis; (R)-pantothenate biosynthesis; (R)-pantothenate from (R)-pantoate and beta-alanine: step 1/1. Functionally, catalyzes the condensation of pantoate with beta-alanine in an ATP-dependent reaction via a pantoyl-adenylate intermediate. The polypeptide is Pantothenate synthetase (Acidovorax sp. (strain JS42)).